Consider the following 78-residue polypeptide: Large ribosomal subunit protein bL28 (78 aa).

This sequence belongs to the bacterial ribosomal protein bL28 family.

This Prochlorococcus marinus (strain MIT 9515) protein is Large ribosomal subunit protein bL28.